The sequence spans 305 residues: MHKFLPIAYFEDKFVPFEDAKISVATHALHYGTAAFGGLRGIPDPEDPGTILLFRLDRHGDRLSKSAKFLHYDISAEKIKEVIVDFVKKNQPDKSFYIRPLVYSSGLGIAPRLHNLEKDFLVYGLEMGDYLAADGVSCRISSWYRQEDRSFPLRGKISAAYITSALAKTEAVESGFDEAILMNSQGKVCEATGMNVFMVRNGQIVTPGNEQDILEGITRDSILTIAADLGIPTCQRPIDKSELMIADEVFLSGTAAKITPVKRIENFTLGGDRPITEKLRSVLTAVTENREPKYQDWVFKIPLNG.

K156 carries the N6-(pyridoxal phosphate)lysine modification.

The protein belongs to the class-IV pyridoxal-phosphate-dependent aminotransferase family. Requires pyridoxal 5'-phosphate as cofactor.

The catalysed reaction is L-leucine + 2-oxoglutarate = 4-methyl-2-oxopentanoate + L-glutamate. It carries out the reaction L-isoleucine + 2-oxoglutarate = (S)-3-methyl-2-oxopentanoate + L-glutamate. It catalyses the reaction L-valine + 2-oxoglutarate = 3-methyl-2-oxobutanoate + L-glutamate. Its pathway is amino-acid biosynthesis; L-isoleucine biosynthesis; L-isoleucine from 2-oxobutanoate: step 4/4. The protein operates within amino-acid biosynthesis; L-leucine biosynthesis; L-leucine from 3-methyl-2-oxobutanoate: step 4/4. It participates in amino-acid biosynthesis; L-valine biosynthesis; L-valine from pyruvate: step 4/4. In terms of biological role, acts on leucine, isoleucine and valine. The polypeptide is Probable branched-chain-amino-acid aminotransferase (ilvE) (Synechocystis sp. (strain ATCC 27184 / PCC 6803 / Kazusa)).